Here is a 185-residue protein sequence, read N- to C-terminus: MIFVIGLGNPGKEYQYTRHNIGFIVIEKIANQYNLSFSTKKKFNCEIVESSVEKQKLIFIKPTTYMNLSGKSVISVKTYYNICSEKIFVIHDDIDLETGRIKFKTGGGNGGHNGLKSIDRVIGNNYNRIRIGVGRPQNNQDVADYVLNNFPRSEYEIVIQSIDKITNNFDLILENKLEEFKNKIG.

Residue tyrosine 14 participates in tRNA binding. The active-site Proton acceptor is the histidine 19. The tRNA site is built by tyrosine 65, asparagine 67, and asparagine 113.

This sequence belongs to the PTH family. In terms of assembly, monomer.

It is found in the cytoplasm. The enzyme catalyses an N-acyl-L-alpha-aminoacyl-tRNA + H2O = an N-acyl-L-amino acid + a tRNA + H(+). In terms of biological role, hydrolyzes ribosome-free peptidyl-tRNAs (with 1 or more amino acids incorporated), which drop off the ribosome during protein synthesis, or as a result of ribosome stalling. Functionally, catalyzes the release of premature peptidyl moieties from peptidyl-tRNA molecules trapped in stalled 50S ribosomal subunits, and thus maintains levels of free tRNAs and 50S ribosomes. The sequence is that of Peptidyl-tRNA hydrolase from Rickettsia canadensis (strain McKiel).